Here is a 265-residue protein sequence, read N- to C-terminus: Acetylglutamate kinase (265 aa).

Substrate is bound by residues 41–42, Arg63, and Asn156; that span reads GG.

The protein belongs to the acetylglutamate kinase family. ArgB subfamily.

The protein resides in the cytoplasm. It carries out the reaction N-acetyl-L-glutamate + ATP = N-acetyl-L-glutamyl 5-phosphate + ADP. The protein operates within amino-acid biosynthesis; L-arginine biosynthesis; N(2)-acetyl-L-ornithine from L-glutamate: step 2/4. Its function is as follows. Catalyzes the ATP-dependent phosphorylation of N-acetyl-L-glutamate. In Oceanobacillus iheyensis (strain DSM 14371 / CIP 107618 / JCM 11309 / KCTC 3954 / HTE831), this protein is Acetylglutamate kinase.